We begin with the raw amino-acid sequence, 206 residues long: Large ribosomal subunit protein uL4 (206 aa).

Residues 63-94 (MYKQKGTGRARHHSARAPQFRGGGKAHGPVVR) are disordered. Residues 64 to 77 (YKQKGTGRARHHSA) are compositionally biased toward basic residues.

The protein belongs to the universal ribosomal protein uL4 family. As to quaternary structure, part of the 50S ribosomal subunit.

Functionally, one of the primary rRNA binding proteins, this protein initially binds near the 5'-end of the 23S rRNA. It is important during the early stages of 50S assembly. It makes multiple contacts with different domains of the 23S rRNA in the assembled 50S subunit and ribosome. Forms part of the polypeptide exit tunnel. The protein is Large ribosomal subunit protein uL4 of Mesorhizobium japonicum (strain LMG 29417 / CECT 9101 / MAFF 303099) (Mesorhizobium loti (strain MAFF 303099)).